Here is a 382-residue protein sequence, read N- to C-terminus: Cell division protein DivIB (382 aa).

Residues 1-103 are Cytoplasmic-facing; sequence MAKDKEKQSD…SATQIAFQKS (103 aa). Basic and acidic residues-rich tracts occupy residues 36-49 and 60-70; these read EKKL…DKKA and VELKTDEKTDS. Residues 36-92 form a disordered region; it reads EKKLKEKLLSDKKAQQQAQNASEAVELKTDEKTDSQEIESETTSKPKKTKKVRQPKE. Residues 104–124 traverse the membrane as a helical segment; that stretch reads LPVLLGALLLMAVSIFMITPY. The region spanning 125–196 is the POTRA domain; that stretch reads SKKKEFSVRG…NHFLFNVIEF (72 aa). Residues 125-382 are Extracellular-facing; that stretch reads SKKKEFSVRG…PETVLEQAHG (258 aa). A disordered region spans residues 322–382; the sequence is QEIENQPEVP…PETVLEQAHG (61 aa). Basic and acidic residues predominate over residues 338–352; the sequence is AADKEGDKPGEHQEQ.

It belongs to the FtsQ/DivIB family. DivIB subfamily.

The protein localises to the cell membrane. Cell division protein that may be involved in stabilizing or promoting the assembly of the division complex. The polypeptide is Cell division protein DivIB (Streptococcus pyogenes serotype M2 (strain MGAS10270)).